Here is a 160-residue protein sequence, read N- to C-terminus: Dihydrofolate reductase (160 aa).

The 160-residue stretch at 1 to 160 (MLIAIWAMTQ…NVNYYRKKQQ (160 aa)) folds into the DHFR domain. 5-7 (IWA) serves as a coordination point for substrate. NADP(+) contacts are provided by residues 6–7 (WA) and 14–19 (IGNNNT). Glutamate 27 contacts substrate. 43-46 (GRKT) is an NADP(+) binding site. Residue arginine 57 participates in substrate binding. NADP(+)-binding positions include 62-65 (LSKD) and 101-106 (CGGKSV). Position 120 (serine 120) interacts with substrate.

It belongs to the dihydrofolate reductase family.

The enzyme catalyses (6S)-5,6,7,8-tetrahydrofolate + NADP(+) = 7,8-dihydrofolate + NADPH + H(+). The protein operates within cofactor biosynthesis; tetrahydrofolate biosynthesis; 5,6,7,8-tetrahydrofolate from 7,8-dihydrofolate: step 1/1. In terms of biological role, key enzyme in folate metabolism. Catalyzes an essential reaction for de novo glycine and purine synthesis, and for DNA precursor synthesis. This chain is Dihydrofolate reductase (folA), found in Mycoplasma genitalium (strain ATCC 33530 / DSM 19775 / NCTC 10195 / G37) (Mycoplasmoides genitalium).